A 378-amino-acid chain; its full sequence is MKILVDENMPYARDLFSRLGEVTAVPGRPIAVAQLADADALMVRSVTKVNESLLAGKPIKFVGTATAGTDHVDEAWLKQAGIGFSAAPGCNAIAVVEYVFSSLLMLAERDGFSLHDRTVGIVGVGNVGRRLQARLEALGIKTLLCDPPRADRGDEGDFRSLDELVQHADILTFHTPLFKDGPYKTLHLADEKLIRSLKPGAILINACRGAVVDNTALLTCLNEGQKLSVVLDVWEGEPELNVELLTKVDIGTPHIAGYTLEGKARGTTQVFEAYSKFIGHEQHVALDTLLPAPEFGRITLHGPLDQPTLKRLVHLVYDVRRDDAPLRKVAGIPGEFDKLRKNYLERREWSSLYVICDDASAASLLCKLGFNAVHHPAR.

Positions 45 and 66 each coordinate substrate. Residues D146 and T175 each coordinate NAD(+). Residue R208 is part of the active site. D232 is a binding site for NAD(+). The active site involves E237. The active-site Proton donor is H254. G257 contacts NAD(+). Residue Y258 coordinates substrate.

Belongs to the D-isomer specific 2-hydroxyacid dehydrogenase family. PdxB subfamily. Homodimer.

The protein localises to the cytoplasm. The enzyme catalyses 4-phospho-D-erythronate + NAD(+) = (R)-3-hydroxy-2-oxo-4-phosphooxybutanoate + NADH + H(+). It participates in cofactor biosynthesis; pyridoxine 5'-phosphate biosynthesis; pyridoxine 5'-phosphate from D-erythrose 4-phosphate: step 2/5. Catalyzes the oxidation of erythronate-4-phosphate to 3-hydroxy-2-oxo-4-phosphonooxybutanoate. This Shigella boydii serotype 4 (strain Sb227) protein is Erythronate-4-phosphate dehydrogenase.